The chain runs to 888 residues: Pyruvate dehydrogenase E1 component (888 aa).

In terms of assembly, homodimer. Part of the PDH complex, consisting of multiple copies of pyruvate dehydrogenase (E1), dihydrolipoamide acetyltransferase (E2) and lipoamide dehydrogenase (E3). Thiamine diphosphate is required as a cofactor.

The enzyme catalyses N(6)-[(R)-lipoyl]-L-lysyl-[protein] + pyruvate + H(+) = N(6)-[(R)-S(8)-acetyldihydrolipoyl]-L-lysyl-[protein] + CO2. Functionally, component of the pyruvate dehydrogenase (PDH) complex, that catalyzes the overall conversion of pyruvate to acetyl-CoA and CO(2). This chain is Pyruvate dehydrogenase E1 component (aceE), found in Buchnera aphidicola subsp. Schizaphis graminum (strain Sg).